A 239-amino-acid polypeptide reads, in one-letter code: Endolytic peptidoglycan transglycosylase RlpA (239 aa).

The first 25 residues, 1-25, serve as a signal peptide directing secretion; the sequence is MTLTRKTLFLLTAAFGTHSLQTASA. The SPOR domain occupies 160-239; the sequence is VAENKDIFID…GMVRAVLTAG (80 aa).

The protein belongs to the RlpA family.

Functionally, lytic transglycosylase with a strong preference for naked glycan strands that lack stem peptides. The chain is Endolytic peptidoglycan transglycosylase RlpA from Neisseria meningitidis serogroup B (strain ATCC BAA-335 / MC58).